Reading from the N-terminus, the 321-residue chain is Diguanylate cyclase (321 aa).

Residues 28–98 form the PAS domain; that stretch reads QFSLHELVLN…AADQQVFETR (71 aa). Positions 102–155 constitute a PAC domain; sequence VHEERAIAKSNGLVRIYRAVKHPILHRVTGEVIGLIGVSTDITDIVELREQLYQ. The GGDEF domain maps to 187-318; the sequence is QPLSCISIDI…GRNRCCIYRQ (132 aa). Residues Asp-195, Ile-196, and Glu-238 each contribute to the Mg(2+) site. Glu-238 (proton acceptor) is an active-site residue.

Mg(2+) is required as a cofactor.

It carries out the reaction 2 GTP = 3',3'-c-di-GMP + 2 diphosphate. Involved in biofilm formation. Catalyzes the conversion of GTP to c-di-GMP. In Vibrio cholerae serotype O1 (strain ATCC 39541 / Classical Ogawa 395 / O395), this protein is Diguanylate cyclase.